We begin with the raw amino-acid sequence, 243 residues long: Triosephosphate isomerase (243 aa).

9–11 (NWK) contributes to the substrate binding site. H96 serves as the catalytic Electrophile. E165 (proton acceptor) is an active-site residue. Residues G171, S204, and 225–226 (GG) contribute to the substrate site.

It belongs to the triosephosphate isomerase family. As to quaternary structure, homodimer.

The protein resides in the cytoplasm. The enzyme catalyses D-glyceraldehyde 3-phosphate = dihydroxyacetone phosphate. It participates in carbohydrate biosynthesis; gluconeogenesis. Its pathway is carbohydrate degradation; glycolysis; D-glyceraldehyde 3-phosphate from glycerone phosphate: step 1/1. Involved in the gluconeogenesis. Catalyzes stereospecifically the conversion of dihydroxyacetone phosphate (DHAP) to D-glyceraldehyde-3-phosphate (G3P). The protein is Triosephosphate isomerase of Prochlorococcus marinus (strain SARG / CCMP1375 / SS120).